A 395-amino-acid chain; its full sequence is Probable alcohol dehydrogenase EutG (395 aa).

NAD(+) contacts are provided by residues Asp-57, 116–120, 156–160, Lys-178, and 197–201; these read GSVLD, TTAGT, and LTEGV. 4 residues coordinate Fe cation: Asp-212, His-216, His-281, and His-295. Positions 295 and 354 each coordinate NAD(+).

It belongs to the iron-containing alcohol dehydrogenase family. Fe cation is required as a cofactor.

The protein localises to the bacterial microcompartment. The enzyme catalyses ethanol + NAD(+) = acetaldehyde + NADH + H(+). Its pathway is amine and polyamine degradation; ethanolamine degradation. Functionally, may act on the acetaldehyde produced from the degradation of ethanolamine, producing ethanol. Active on acetaldehyde and isobutyraldehyde in vitro. In vitro works equally well with NADH or NADPH. The sequence is that of Probable alcohol dehydrogenase EutG (eutG) from Escherichia coli (strain K12).